A 616-amino-acid polypeptide reads, in one-letter code: Chaperone protein HscA homolog (616 aa).

Belongs to the heat shock protein 70 family.

Its function is as follows. Chaperone involved in the maturation of iron-sulfur cluster-containing proteins. Has a low intrinsic ATPase activity which is markedly stimulated by HscB. This Histophilus somni (strain 2336) (Haemophilus somnus) protein is Chaperone protein HscA homolog.